A 241-amino-acid chain; its full sequence is Terpene cyclase terB (241 aa).

The next 5 membrane-spanning stretches (helical) occupy residues 19–39 (LADT…GAMI), 48–68 (YCMG…YTLV), 75–95 (VELA…FAAT), 114–134 (LIFL…AAEI), and 137–157 (ALAY…GGVC). Asn163 is a glycosylation site (N-linked (GlcNAc...) asparagine). The next 2 membrane-spanning stretches (helical) occupy residues 169 to 189 (SVTL…FAFL) and 198 to 218 (FAWL…LADI).

Belongs to the paxB family.

The protein localises to the membrane. It participates in secondary metabolite biosynthesis. In terms of biological role, terpene cyclase; part of the gene cluster that mediates the biosynthesis of terpendoles, indole-diterpene (IDT) mycotoxins including terpendole I, terpendole K, terpendole C, as well as the kinesin Eg5 inhibitor terpendole E. Terpendoles biosynthesis begins with the synthesis of geranylgeranyl diphosphate (GGPP) by a yet unidentified GGPP synthase. Condensation of indole-3-glycerol phosphate with GGPP by the prenyltransferase terC then forms 3-geranylgeranylindole (3-GGI), followed by epoxidation and cyclization of this intermediate (by the FAD-dependent monooxygeanse terM and the terpene cyclase terB) to form paspaline. The cytochrome monooxygenase terQ then hydroxylates paspalline at C-11 to yield terpendole E. The cytochrome monooxygenase terP converts terpendole E to 13-desoxyterpendole I, and terQ converts 13-desoxyterpendole I into terpendole I. TerF and terK are required for conversion of terpendole I to terpendole C which is further converted to terpendole K. This is Terpene cyclase terB from Tolypocladium album (Soil fungus).